Here is a 160-residue protein sequence, read N- to C-terminus: Crossover junction endodeoxyribonuclease RuvC (160 aa).

Catalysis depends on residues D7, E70, and D142. Mg(2+) contacts are provided by D7, E70, and D142.

This sequence belongs to the RuvC family. As to quaternary structure, homodimer which binds Holliday junction (HJ) DNA. The HJ becomes 2-fold symmetrical on binding to RuvC with unstacked arms; it has a different conformation from HJ DNA in complex with RuvA. In the full resolvosome a probable DNA-RuvA(4)-RuvB(12)-RuvC(2) complex forms which resolves the HJ. It depends on Mg(2+) as a cofactor.

Its subcellular location is the cytoplasm. The catalysed reaction is Endonucleolytic cleavage at a junction such as a reciprocal single-stranded crossover between two homologous DNA duplexes (Holliday junction).. Its function is as follows. The RuvA-RuvB-RuvC complex processes Holliday junction (HJ) DNA during genetic recombination and DNA repair. Endonuclease that resolves HJ intermediates. Cleaves cruciform DNA by making single-stranded nicks across the HJ at symmetrical positions within the homologous arms, yielding a 5'-phosphate and a 3'-hydroxyl group; requires a central core of homology in the junction. The consensus cleavage sequence is 5'-(A/T)TT(C/G)-3'. Cleavage occurs on the 3'-side of the TT dinucleotide at the point of strand exchange. HJ branch migration catalyzed by RuvA-RuvB allows RuvC to scan DNA until it finds its consensus sequence, where it cleaves and resolves the cruciform DNA. The chain is Crossover junction endodeoxyribonuclease RuvC from Ehrlichia ruminantium (strain Welgevonden).